We begin with the raw amino-acid sequence, 83 residues long: NAD(P)H-quinone oxidoreductase subunit L, organellar chromatophore (83 aa).

Helical transmembrane passes span 17–37 and 53–73; these read LLLA…LALY and LFVY…SPFL.

Belongs to the complex I NdhL subunit family. In terms of assembly, NDH-1 can be composed of about 15 different subunits; different subcomplexes with different compositions have been identified which probably have different functions.

The protein localises to the plastid. Its subcellular location is the organellar chromatophore thylakoid membrane. It catalyses the reaction a plastoquinone + NADH + (n+1) H(+)(in) = a plastoquinol + NAD(+) + n H(+)(out). The enzyme catalyses a plastoquinone + NADPH + (n+1) H(+)(in) = a plastoquinol + NADP(+) + n H(+)(out). Functionally, NDH-1 shuttles electrons from an unknown electron donor, via FMN and iron-sulfur (Fe-S) centers, to quinones in the respiratory and/or the photosynthetic chain. The immediate electron acceptor for the enzyme in this species is believed to be plastoquinone. Couples the redox reaction to proton translocation, and thus conserves the redox energy in a proton gradient. The chain is NAD(P)H-quinone oxidoreductase subunit L, organellar chromatophore from Paulinella chromatophora.